Consider the following 313-residue polypeptide: Acetaldehyde dehydrogenase 1 (313 aa).

16–19 (SGNI) contributes to the NAD(+) binding site. Cysteine 131 acts as the Acyl-thioester intermediate in catalysis. Residues 162–170 (SAGPGTRAN) and asparagine 281 contribute to the NAD(+) site.

The protein belongs to the acetaldehyde dehydrogenase family.

The enzyme catalyses acetaldehyde + NAD(+) + CoA = acetyl-CoA + NADH + H(+). This chain is Acetaldehyde dehydrogenase 1, found in Mycobacterium sp. (strain JLS).